The chain runs to 264 residues: Nicotinamide N-methyltransferase (264 aa).

Arg-18 carries the citrulline; alternate modification. Residues Tyr-20 and Tyr-25 each coordinate S-adenosyl-L-methionine. At Lys-39 the chain carries N6-acetyllysine. Positions 63, 69, 85, and 90 each coordinate S-adenosyl-L-methionine. At Arg-132 the chain carries Citrulline; alternate. Residues 142 to 143 (DV) and Thr-163 contribute to the S-adenosyl-L-methionine site. Arg-181 is modified (citrulline; alternate). Nicotinamide contacts are provided by Asp-197 and Ser-213.

It belongs to the class I-like SAM-binding methyltransferase superfamily. NNMT/PNMT/TEMT family. As to quaternary structure, monomer. Deiminated by PADI1 and PADI2. As to expression, predominantly expressed in the liver. A lower expression is seen in the kidney, lung, skeletal muscle, placenta and heart. Not detected in the brain or pancreas.

It localises to the cytoplasm. The catalysed reaction is nicotinamide + S-adenosyl-L-methionine = 1-methylnicotinamide + S-adenosyl-L-homocysteine. The protein operates within cofactor metabolism. It functions in the pathway amino-acid degradation. With respect to regulation, inactivated by deimination on Arg-132. Catalyzes the N-methylation of nicotinamide using the universal methyl donor S-adenosyl-L-methionine to form N1-methylnicotinamide and S-adenosyl-L-homocysteine, a predominant nicotinamide/vitamin B3 clearance pathway. Plays a central role in regulating cellular methylation potential, by consuming S-adenosyl-L-methionine and limiting its availability for other methyltransferases. Actively mediates genome-wide epigenetic and transcriptional changes through hypomethylation of repressive chromatin marks, such as H3K27me3. In a developmental context, contributes to low levels of the repressive histone marks that characterize pluripotent embryonic stem cell pre-implantation state. Acts as a metabolic regulator primarily on white adipose tissue energy expenditure as well as hepatic gluconeogenesis and cholesterol biosynthesis. In white adipocytes, regulates polyamine flux by consuming S-adenosyl-L-methionine which provides for propylamine group in polyamine biosynthesis, whereas by consuming nicotinamide controls NAD(+) levels through the salvage pathway. Via its product N1-methylnicotinamide regulates protein acetylation in hepatocytes, by repressing the ubiquitination and increasing the stability of SIRT1 deacetylase. Can also N-methylate other pyridines structurally related to nicotinamide and play a role in xenobiotic detoxification. This is Nicotinamide N-methyltransferase from Homo sapiens (Human).